The following is a 485-amino-acid chain: BTB/POZ domain-containing protein YLR108C (485 aa).

The BTB domain maps to Glu-26–Thr-121.

The protein resides in the nucleus. The polypeptide is BTB/POZ domain-containing protein YLR108C (Saccharomyces cerevisiae (strain ATCC 204508 / S288c) (Baker's yeast)).